The chain runs to 95 residues: Small ubiquitin-related modifier 4 (95 aa).

The Ubiquitin-like domain occupies His17–Tyr95. A Glycyl lysine isopeptide (Gly-Lys) (interchain with K-? in acceptor proteins) cross-link involves residue Gly93. A propeptide spanning residues Val94–Tyr95 is cleaved from the precursor.

The protein belongs to the ubiquitin family. SUMO subfamily. As to quaternary structure, interacts with SAE2. Covalently attached to a number of proteins.

Its function is as follows. Ubiquitin-like protein which can be covalently attached to target lysines as a monomer. Does not seem to be involved in protein degradation and may modulate protein subcellular localization, stability or activity. Upon oxidative stress, conjugates to various anti-oxidant enzymes, chaperones, and stress defense proteins. May also conjugate to NFKBIA, TFAP2A and FOS, negatively regulating their transcriptional activity, and to NR3C1, positively regulating its transcriptional activity. Covalent attachment to its substrates requires prior activation by the E1 complex SAE1-SAE2 and linkage to the E2 enzyme UBE2I. The protein is Small ubiquitin-related modifier 4 (SUMO4) of Sus scrofa (Pig).